Consider the following 394-residue polypeptide: Hemagglutinin-esterase (394 aa).

The signal sequence occupies residues 1–16 (MARFIILFLLLAPVYS). Residues 17-347 (RLCLRNHPDT…NNRVDAIPPQ (331 aa)) are Extracellular-facing. Ser32 is an active-site residue. Residues 119 to 121 (RGD) carry the Cell attachment site motif. Catalysis depends on residues Asp261 and His264. Asn333 carries N-linked (GlcNAc...) asparagine; by host glycosylation. The highly polymorphic region stretch occupies residues 335-358 (TDVNNRVDAIPPQLSNIFISMGVA). Residues 348 to 368 (LSNIFISMGVAGFGIALFLAG) traverse the membrane as a helical segment. The Cytoplasmic segment spans residues 369–394 (WKACVWIAAFMYKSRGRNPPANLSVA).

It localises to the host membrane. The protein resides in the virion membrane. It catalyses the reaction N-acetyl-9-O-acetylneuraminate + H2O = N-acetylneuraminate + acetate + H(+). The catalysed reaction is N-acetyl-4-O-acetylneuraminate + H2O = N-acetylneuraminate + acetate + H(+). In terms of biological role, performs attachment to host receptor thereby inducing virus particle entry into target cell. Binds specifically to 5-N-acetyl-4-O-acetyl neuraminic acid on host cells, which plays a major role in cell tropism of the virus. ALso mediates de-O-acetylation of N-acetyl-4-O-acetylneuraminic acid. This receptor-destroying activity is important for virus release as it probably helps preventing self-aggregation and ensures the efficient spread of the progeny virus from cell to cell. The highly polymorphic region (HPR) modulates the virulence in host. Catalyzes the removal of terminal sialic acid residues from viral and cellular glycoconjugates. The chain is Hemagglutinin-esterase from Gadus morhua (Atlantic cod).